A 289-amino-acid chain; its full sequence is 2-hydroxy-6-oxononadienedioate/2-hydroxy-6-oxononatrienedioate hydrolase (289 aa).

In terms of domain architecture, AB hydrolase-1 spans 39–275; that stretch reads TVVMLHGSGP…RCGHWAQWEH (237 aa). Residue H269 is the Proton acceptor of the active site.

Belongs to the AB hydrolase superfamily. MhpC family. Homodimer.

The catalysed reaction is (2Z,4E)-2-hydroxy-6-oxonona-2,4-dienedioate + H2O = (2Z)-2-hydroxypenta-2,4-dienoate + succinate + H(+). The enzyme catalyses (2Z,4E,7E)-2-hydroxy-6-oxonona-2,4,7-trienedioate + H2O = (2Z)-2-hydroxypenta-2,4-dienoate + fumarate + H(+). The protein operates within aromatic compound metabolism; 3-phenylpropanoate degradation. Functionally, catalyzes the cleavage of the C5-C6 bond of 2-hydroxy-6-oxononadienedioate and 2-hydroxy-6-oxononatrienedioate, a dienol ring fission product of the bacterial meta-cleavage pathway for degradation of phenylpropionic acid. This Paraburkholderia xenovorans (strain LB400) protein is 2-hydroxy-6-oxononadienedioate/2-hydroxy-6-oxononatrienedioate hydrolase.